A 395-amino-acid polypeptide reads, in one-letter code: Probable sugar efflux transporter (395 aa).

12 helical membrane-spanning segments follow: residues 13–33, 48–68, 82–102, 107–127, 134–154, 168–188, 207–227, 244–264, 272–292, 297–317, 331–351, and 363–383; these read VVSL…PVAL, VGLI…PCML, IFIL…YWVL, IGVA…VVRL, AQAL…GLPL, FVLI…LLPV, PALL…FTAY, FTTI…MLFS, AGFL…LLPL, WSLS…SLGM, VAMA…ALLG, and IGYM…FTFV.

It belongs to the major facilitator superfamily. SotB (TC 2.A.1.2) family.

The protein resides in the cell inner membrane. Its function is as follows. Involved in the efflux of sugars. The physiological role may be the reduction of the intracellular concentration of toxic sugars or sugar metabolites. In Pectobacterium atrosepticum (strain SCRI 1043 / ATCC BAA-672) (Erwinia carotovora subsp. atroseptica), this protein is Probable sugar efflux transporter.